Consider the following 431-residue polypeptide: Histidinol dehydrogenase (431 aa).

Residues Y130, Q191, and N214 each coordinate NAD(+). The substrate site is built by S237, Q261, and H264. The Zn(2+) site is built by Q261 and H264. Residues E329 and H330 each act as proton acceptor in the active site. Substrate-binding residues include H330, D363, E417, and H422. Residue D363 participates in Zn(2+) binding. Zn(2+) is bound at residue H422.

It belongs to the histidinol dehydrogenase family. Requires Zn(2+) as cofactor.

It catalyses the reaction L-histidinol + 2 NAD(+) + H2O = L-histidine + 2 NADH + 3 H(+). It participates in amino-acid biosynthesis; L-histidine biosynthesis; L-histidine from 5-phospho-alpha-D-ribose 1-diphosphate: step 9/9. Functionally, catalyzes the sequential NAD-dependent oxidations of L-histidinol to L-histidinaldehyde and then to L-histidine. The sequence is that of Histidinol dehydrogenase from Psychrobacter arcticus (strain DSM 17307 / VKM B-2377 / 273-4).